A 287-amino-acid chain; its full sequence is Elongation factor Ts (287 aa).

Residues 80–83 (TDFL) form an involved in Mg(2+) ion dislocation from EF-Tu region.

The protein belongs to the EF-Ts family.

The protein localises to the cytoplasm. In terms of biological role, associates with the EF-Tu.GDP complex and induces the exchange of GDP to GTP. It remains bound to the aminoacyl-tRNA.EF-Tu.GTP complex up to the GTP hydrolysis stage on the ribosome. The protein is Elongation factor Ts of Pseudomonas entomophila (strain L48).